We begin with the raw amino-acid sequence, 457 residues long: Putative metabolite transport protein YwtG (457 aa).

12 helical membrane-spanning segments follow: residues 7–27 (IWLYFFGALGGALYGYDTGVI), 38–58 (LGLNAFTEGLVVSSLLVGAIL), 75–95 (AIMAAALLFCIGGLGVALAPN), 97–117 (GVMVLFRIILGLAVGTSTTIV), 136–156 (LNQLMITVGILLSYIVNYIFA), 163–183 (WMLGLAAVPSLLLLIGILFMP), 240–260 (ALIAGLGLAFLQQFIGTNTII), 276–296 (ASILGTVGIGTVNVLMTLVAI), 309–329 (LFGNAGMVISLIVLALVNLFF), 340–360 (VICLGVFIVVFAVSWGPVVWV), 377–397 (VSTLMLHVGTLIVSLTYPILM), and 400–420 (IGISYLFLIYAAIGIMAFLFV). Positions 438–457 (DLRDKNGQGGAAGKQQTVGT) are disordered.

The protein belongs to the major facilitator superfamily. Sugar transporter (TC 2.A.1.1) family.

It localises to the cell membrane. The chain is Putative metabolite transport protein YwtG (ywtG) from Bacillus subtilis (strain 168).